A 505-amino-acid polypeptide reads, in one-letter code: ATP synthase subunit alpha (505 aa).

Residue 170-177 participates in ATP binding; it reads GDRQTGKT.

It belongs to the ATPase alpha/beta chains family. As to quaternary structure, F-type ATPases have 2 components, CF(1) - the catalytic core - and CF(0) - the membrane proton channel. CF(1) has five subunits: alpha(3), beta(3), gamma(1), delta(1), epsilon(1). CF(0) has four main subunits: a(1), b(1), b'(1) and c(9-12).

Its subcellular location is the cellular thylakoid membrane. It catalyses the reaction ATP + H2O + 4 H(+)(in) = ADP + phosphate + 5 H(+)(out). Its function is as follows. Produces ATP from ADP in the presence of a proton gradient across the membrane. The alpha chain is a regulatory subunit. The polypeptide is ATP synthase subunit alpha (Prochlorococcus marinus subsp. pastoris (strain CCMP1986 / NIES-2087 / MED4)).